Consider the following 310-residue polypeptide: Transcription factor RAX3 (310 aa).

2 consecutive HTH myb-type domains span residues 9–62 (KANV…LNYL) and 63–117 (RPNI…KKKL). DNA-binding regions (H-T-H motif) lie at residues 38–62 (WIALPQKIGLKRCGKSCRLRWLNYL) and 90–113 (WSIIAAQLPGRTDNDIKNYWNTRL).

Ubiquitous.

Its subcellular location is the nucleus. Its function is as follows. Transcription activator. Positively regulates axillary meristems (AMs) formation and development, especially during inflorescence. The polypeptide is Transcription factor RAX3 (RAX3) (Arabidopsis thaliana (Mouse-ear cress)).